A 347-amino-acid polypeptide reads, in one-letter code: Histidinol-phosphate aminotransferase (347 aa).

Lys-209 carries the post-translational modification N6-(pyridoxal phosphate)lysine.

Belongs to the class-II pyridoxal-phosphate-dependent aminotransferase family. Histidinol-phosphate aminotransferase subfamily. Homodimer. Pyridoxal 5'-phosphate serves as cofactor.

The catalysed reaction is L-histidinol phosphate + 2-oxoglutarate = 3-(imidazol-4-yl)-2-oxopropyl phosphate + L-glutamate. Its pathway is amino-acid biosynthesis; L-histidine biosynthesis; L-histidine from 5-phospho-alpha-D-ribose 1-diphosphate: step 7/9. This is Histidinol-phosphate aminotransferase from Geotalea uraniireducens (strain Rf4) (Geobacter uraniireducens).